The following is a 434-amino-acid chain: Glycerol-3-phosphate acyltransferase 3 (434 aa).

A helical transmembrane segment spans residues 14 to 34 (WLTLVLGFILLPSVFGVSLGI). A phosphoserine mark is found at Ser-68 and Ser-77. 2 helical membrane-spanning segments follow: residues 137–157 (ISLR…CVLL) and 161–181 (VTLA…VGQL). The HXXXXD motif signature appears at 229-234 (HTSPID).

The protein belongs to the 1-acyl-sn-glycerol-3-phosphate acyltransferase family. Widely expressed. Expressed in liver, kidney, testis, brain, heart, skeletal muscle, thyroid, prostate, thymus and placenta. Also expressed lung and adipose tissue.

Its subcellular location is the endoplasmic reticulum membrane. It carries out the reaction sn-glycerol 3-phosphate + an acyl-CoA = a 1-acyl-sn-glycero-3-phosphate + CoA. It catalyses the reaction a 1-acyl-sn-glycero-3-phosphate + an acyl-CoA = a 1,2-diacyl-sn-glycero-3-phosphate + CoA. The catalysed reaction is dodecanoyl-CoA + sn-glycerol 3-phosphate = 1-dodecanoyl-sn-glycerol 3-phosphate + CoA. The enzyme catalyses sn-glycerol 3-phosphate + hexadecanoyl-CoA = 1-hexadecanoyl-sn-glycero-3-phosphate + CoA. It carries out the reaction sn-glycerol 3-phosphate + (9Z)-octadecenoyl-CoA = 1-(9Z-octadecenoyl)-sn-glycero-3-phosphate + CoA. It catalyses the reaction (9Z,12Z)-octadecadienoyl-CoA + sn-glycerol 3-phosphate = 1-(9Z,12Z)-octadecadienoyl-sn-glycero-3-phosphate + CoA. The catalysed reaction is 1-tetradecanoyl-sn-glycerol 3-phosphate + (9Z)-octadecenoyl-CoA = 1-tetradecanoyl-2-(9Z)-octadecenoyl-sn-glycero-3-phosphate + CoA. The enzyme catalyses 1-hexadecanoyl-sn-glycero-3-phosphate + (9Z)-octadecenoyl-CoA = 1-hexadecanoyl-2-(9Z-octadecenoyl)-sn-glycero-3-phosphate + CoA. It carries out the reaction 1-(9Z-octadecenoyl)-sn-glycero-3-phosphate + (9Z)-octadecenoyl-CoA = 1,2-di-(9Z-octadecenoyl)-sn-glycero-3-phosphate + CoA. It catalyses the reaction 1-(6Z,9Z,12Z-octadecatrienoyl)-sn-glycero-3-phosphate + (9Z)-octadecenoyl-CoA = (6Z,9Z,12Z)-octadecatrienoyl-2-(9Z)-octadecenoyl-sn-glycero-3-phosphate + CoA. The catalysed reaction is 1-(9Z,12Z,15Z)-octadecatrienoyl-sn-glycero-3-phosphate + (9Z)-octadecenoyl-CoA = 1-(9Z,12Z,15Z)-octadecatrienoyl-2-(9Z)-octadecenoyl-sn-glycero-3-phosphate + CoA. The enzyme catalyses 1-(9Z-octadecenoyl)-sn-glycero-3-phosphate + tetradecanoyl-CoA = 1-(9Z)-octadecenoyl-2-tetradecanoyl-sn-glycero-3-phosphate + CoA. It carries out the reaction 1-(9Z-octadecenoyl)-sn-glycero-3-phosphate + hexadecanoyl-CoA = 1-(9Z)-octadecenoyl-2-hexadecanoyl-sn-glycero-3-phosphate + CoA. It catalyses the reaction 1-(9Z-octadecenoyl)-sn-glycero-3-phosphate + octadecanoyl-CoA = 1-(9Z-octadecenoyl)-2-octadecanoyl-sn-glycero-3-phosphate + CoA. The catalysed reaction is 1-(9Z-octadecenoyl)-sn-glycero-3-phosphate + (9Z,12Z)-octadecadienoyl-CoA = 1-(9Z)-octadecenoyl-2-(9Z,12Z)-octadecadienoyl-sn-glycero-3-phosphate + CoA. The enzyme catalyses 1-(5Z,8Z,11Z,14Z-eicosatetraenoyl)-sn-glycero-3-phosphate + (9Z)-octadecenoyl-CoA = 1-(5Z,8Z,11Z,14Z)-eicosatetraenoyl-2-(9Z)-octadecenoyl-sn-glycero-3-phosphate + CoA. The protein operates within glycerolipid metabolism; triacylglycerol biosynthesis. It participates in phospholipid metabolism; CDP-diacylglycerol biosynthesis; CDP-diacylglycerol from sn-glycerol 3-phosphate: step 1/3. Inhibited by N-ethylmaleimide (NEM). Functionally, converts glycerol-3-phosphate to 1-acyl-sn-glycerol-3-phosphate (lysophosphatidic acid or LPA) by incorporating an acyl moiety at the sn-1 position of the glycerol backbone. Also converts LPA into 1,2-diacyl-sn-glycerol-3-phosphate (phosphatidic acid or PA) by incorporating an acyl moiety at the sn-2 position of the glycerol backbone. Protects cells against lipotoxicity. The chain is Glycerol-3-phosphate acyltransferase 3 from Homo sapiens (Human).